The primary structure comprises 173 residues: MRLGYLIVGCAVALLATTDGVVDASSKHKQLSTDVPRPADDISSERFLRSQDTPEDDGNPAHEDRGYLTVLTNAAMHPLRERKMKNQIANLIKMDATDAELYAAGVQPHRLFDVIRHKDESVEMSLSQWVTMVHQHQFPSDYIWKSQAYRRFKQYAGFYDGMQRNGQRVASTT.

The first 24 residues, Met1 to Ala24, serve as a signal peptide directing secretion. The interval Ser25 to Asp64 is disordered. Over residues Arg37–Arg49 the composition is skewed to basic and acidic residues. Positions Arg46–Arg65 match the RxLR-dEER motif.

This sequence belongs to the RxLR effector family.

The protein localises to the secreted. Its subcellular location is the host nucleus. The protein resides in the host cytoplasm. In terms of biological role, effector that leads to host programmed cell death. The chain is RxLR effector protein PITG_10232 from Phytophthora infestans (strain T30-4) (Potato late blight agent).